A 215-amino-acid chain; its full sequence is Beta-crystallin A3 (215 aa).

Met1 is modified (N-acetylmethionine). Residues 1 to 24 form a disordered region; sequence METQTVQQELESLPTTKMAQTNPM. An N-terminal arm region spans residues 1 to 30; that stretch reads METQTVQQELESLPTTKMAQTNPMPGSVGP. The residue at position 2 (Glu2) is an N-acetylalanine. 2 Beta/gamma crystallin 'Greek key' domains span residues 31–70 and 71–117; these read WKIT…KVEC and GAWV…RPIC. Cys82 and Cys117 each carry S-glutathionyl cysteine; alternate. An S-methylcysteine; alternate mark is found at Cys82 and Cys117. Residues 118 to 123 are connecting peptide; the sequence is SANHKE. Beta/gamma crystallin 'Greek key' domains are found at residues 124 to 165 and 166 to 214; these read SKIT…KIQC and GAWV…RRIQ.

It belongs to the beta/gamma-crystallin family. In terms of assembly, homo/heterodimer, or complexes of higher-order. The structure of beta-crystallin oligomers seems to be stabilized through interactions between the N-terminal arms. Interacts with CRYBA1. Specific cleavages in the N-terminal arm occur during lens maturation and give rise to several truncated forms. Post-translationally, isoform A1 contains a N-acetylalanine at position 2.

Crystallins are the dominant structural components of the vertebrate eye lens. This is Beta-crystallin A3 from Bos taurus (Bovine).